Here is a 229-residue protein sequence, read N- to C-terminus: Biosynthetic peptidoglycan transglycosylase (229 aa).

Residues 10 to 30 traverse the membrane as a helical segment; that stretch reads LLLALVLVVLYQFWIFMHILW.

The protein belongs to the glycosyltransferase 51 family.

It is found in the cell inner membrane. The catalysed reaction is [GlcNAc-(1-&gt;4)-Mur2Ac(oyl-L-Ala-gamma-D-Glu-L-Lys-D-Ala-D-Ala)](n)-di-trans,octa-cis-undecaprenyl diphosphate + beta-D-GlcNAc-(1-&gt;4)-Mur2Ac(oyl-L-Ala-gamma-D-Glu-L-Lys-D-Ala-D-Ala)-di-trans,octa-cis-undecaprenyl diphosphate = [GlcNAc-(1-&gt;4)-Mur2Ac(oyl-L-Ala-gamma-D-Glu-L-Lys-D-Ala-D-Ala)](n+1)-di-trans,octa-cis-undecaprenyl diphosphate + di-trans,octa-cis-undecaprenyl diphosphate + H(+). It functions in the pathway cell wall biogenesis; peptidoglycan biosynthesis. Functionally, peptidoglycan polymerase that catalyzes glycan chain elongation from lipid-linked precursors. This is Biosynthetic peptidoglycan transglycosylase from Methylobacillus flagellatus (strain ATCC 51484 / DSM 6875 / VKM B-1610 / KT).